The primary structure comprises 389 residues: Transcription factor TGAL10 (389 aa).

The tract at residues Asp80–Ile110 is disordered. Basic and acidic residues predominate over residues Ser91–Ile110. The 45-residue stretch at Arg107 to Arg151 folds into the bZIP domain. The segment at Lys109–Lys129 is basic motif. Residues Leu135–Ile149 form a leucine-zipper region. The 214-residue stretch at Val176 to Gly389 folds into the DOG1 domain. Disordered stretches follow at residues Thr320–Gly345 and His370–Gly389. Residues Leu380–Gly389 are compositionally biased toward basic residues.

It belongs to the bZIP family.

It localises to the nucleus. Its function is as follows. Transcriptional regulator involved in defense response. This is Transcription factor TGAL10 from Oryza sativa subsp. japonica (Rice).